A 206-amino-acid polypeptide reads, in one-letter code: Thymidylate kinase (206 aa).

Residue 11 to 18 coordinates ATP; the sequence is GIDGAGKT.

This sequence belongs to the thymidylate kinase family.

It catalyses the reaction dTMP + ATP = dTDP + ADP. In terms of biological role, phosphorylation of dTMP to form dTDP in both de novo and salvage pathways of dTTP synthesis. This Paraburkholderia xenovorans (strain LB400) protein is Thymidylate kinase.